Here is a 234-residue protein sequence, read N- to C-terminus: Large ribosomal subunit protein uL1 (234 aa).

It belongs to the universal ribosomal protein uL1 family. As to quaternary structure, part of the 50S ribosomal subunit.

Functionally, binds directly to 23S rRNA. The L1 stalk is quite mobile in the ribosome, and is involved in E site tRNA release. Protein L1 is also a translational repressor protein, it controls the translation of the L11 operon by binding to its mRNA. This Maridesulfovibrio salexigens (strain ATCC 14822 / DSM 2638 / NCIMB 8403 / VKM B-1763) (Desulfovibrio salexigens) protein is Large ribosomal subunit protein uL1.